A 361-amino-acid polypeptide reads, in one-letter code: Large ribosomal subunit protein mL45 (361 aa).

Belongs to the mitochondrion-specific ribosomal protein mL45 family.

The protein resides in the mitochondrion. The protein is Large ribosomal subunit protein mL45 (mrpl-45) of Caenorhabditis briggsae.